We begin with the raw amino-acid sequence, 326 residues long: Cinnamoyl-CoA reductase CAD2 (326 aa).

NADP(+) contacts are provided by residues 14 to 20 (GASGYIA), R39, K46, 66 to 67 (NL), and 86 to 88 (TAS). (E)-coniferaldehyde is bound by residues S130, Y136, R141, and Y165. NADP(+)-binding positions include Y165, K169, 192-195 (PAMV), and S207. K169 (proton donor) is an active-site residue. M194, S207, F226, V257, and Y290 together coordinate (E)-coniferaldehyde.

Belongs to the NAD(P)-dependent epimerase/dehydratase family. Dihydroflavonol-4-reductase subfamily.

The protein resides in the cytoplasm. The enzyme catalyses (E)-cinnamaldehyde + NADP(+) + CoA = (E)-cinnamoyl-CoA + NADPH + H(+). It carries out the reaction (E)-coniferaldehyde + NADP(+) + CoA = (E)-feruloyl-CoA + NADPH + H(+). It catalyses the reaction (E)-4-coumaraldehyde + NADP(+) + CoA = (E)-4-coumaroyl-CoA + NADPH + H(+). The protein operates within aromatic compound metabolism; phenylpropanoid biosynthesis. Involved in lignin biosynthesis. Regulates the monolignol composition by catalyzing the conversion of cinnamoyl-CoAs into their corresponding cinnamaldehydes. Can use coumaraldehyde and coniferaldehyde as substrates, but barely sinapaldehyde. In Medicago truncatula (Barrel medic), this protein is Cinnamoyl-CoA reductase CAD2.